Consider the following 172-residue polypeptide: Disulfide bond formation protein B (172 aa).

Over 1–11 the chain is Cytoplasmic; that stretch reads MNPFRWSFRAQ. Residues 12–28 form a helical membrane-spanning segment; the sequence is FLLGFLACAGLLAYAIY. The Periplasmic segment spans residues 29–46; sequence VQLHLGLEPCPLCIFQRI. Cys-38 and Cys-41 are oxidised to a cystine. A helical transmembrane segment spans residues 47 to 63; that stretch reads AFAALAMFFLLGALHGP. At 64-70 the chain is on the cytoplasmic side; the sequence is RAAAGRK. Residues 71-88 form a helical membrane-spanning segment; that stretch reads VYGVLSFIAAGVGMGIAA. At 89–145 the chain is on the periplasmic side; that stretch reads RHVWVQIRPKDMMSSCGPPLSFLSETMGPFEVFRTVLTGTGDCGNIDWRFLGLSMPM. The cysteines at positions 104 and 131 are disulfide-linked. The chain crosses the membrane as a helical span at residues 146–164; that stretch reads WSMVWFVGLALWALYAGFK. Over 165-172 the chain is Cytoplasmic; sequence ARRSSVHH.

It belongs to the DsbB family.

It localises to the cell inner membrane. Its function is as follows. Required for disulfide bond formation in some periplasmic proteins. Acts by oxidizing the DsbA protein. This is Disulfide bond formation protein B from Xanthomonas euvesicatoria pv. vesicatoria (strain 85-10) (Xanthomonas campestris pv. vesicatoria).